The sequence spans 221 residues: Deoxyribose-phosphate aldolase (221 aa).

Residue Asp-91 is the Proton donor/acceptor of the active site. The active-site Schiff-base intermediate with acetaldehyde is Lys-153. Lys-182 serves as the catalytic Proton donor/acceptor.

Belongs to the DeoC/FbaB aldolase family. DeoC type 1 subfamily.

The protein resides in the cytoplasm. The enzyme catalyses 2-deoxy-D-ribose 5-phosphate = D-glyceraldehyde 3-phosphate + acetaldehyde. The protein operates within carbohydrate degradation; 2-deoxy-D-ribose 1-phosphate degradation; D-glyceraldehyde 3-phosphate and acetaldehyde from 2-deoxy-alpha-D-ribose 1-phosphate: step 2/2. Catalyzes a reversible aldol reaction between acetaldehyde and D-glyceraldehyde 3-phosphate to generate 2-deoxy-D-ribose 5-phosphate. The polypeptide is Deoxyribose-phosphate aldolase (Clostridium botulinum (strain Eklund 17B / Type B)).